Here is a 500-residue protein sequence, read N- to C-terminus: tRNA nucleotidyltransferase cca1 (500 aa).

Residues 122 to 139 (DYTNSNSSNKLVFGTPLE) form a flexible loop region. The ERhxxExxxhh motif motif lies at 231–241 (ERIGVEVDKML).

This sequence belongs to the tRNA nucleotidyltransferase/poly(A) polymerase family.

It catalyses the reaction a tRNA precursor + 2 CTP = a tRNA with a 3' CC end + 2 diphosphate. TRNA nucleotidyltransferase involved in the synthesis of the tRNA CCA terminus. In contrast to what is usually observed in eukaryotes for which one enzyme synthesizes the whole tRNA CCA terminus, in S.pombe, cca1 specifically adds two cytidine residues to a tRNA substrate lacking this sequence while cca2 specifically adds the terminal adenosine residue thereby completing the CCA sequence. This is tRNA nucleotidyltransferase cca1 from Schizosaccharomyces pombe (strain 972 / ATCC 24843) (Fission yeast).